A 102-amino-acid polypeptide reads, in one-letter code: Salivary protein Salp9 (102 aa).

The N-terminal stretch at 1–21 is a signal peptide; that stretch reads MGLTEIMLVLVSLAFVATAAA. Residues Asn-26 and Asn-87 are each glycosylated (N-linked (GlcNAc...) asparagine). Positions 83 to 102 are disordered; the sequence is SGVPNDTDAKIEETEEELEA.

The protein belongs to the salp14 family. As to expression, salivary gland (at protein level). Saliva (at protein level). Midgut.

The protein localises to the secreted. Salivary protein that facilitates blood feeding of adult ticks on vertebrate species. Inhibits the lectin pathway of complement system activation in the host. This Ixodes scapularis (Black-legged tick) protein is Salivary protein Salp9.